A 581-amino-acid chain; its full sequence is Laccase-1 (581 aa).

The N-terminal stretch at 1–25 (MENLGFLIISTFLLLFTTLLPYSSA) is a signal peptide. Plastocyanin-like domains follow at residues 34–150 (NVEW…PRQP) and 161–312 (EIPI…YTGK). N-linked (GlcNAc...) asparagine glycosylation occurs at N80. Positions 84, 86, 129, and 131 each coordinate Cu cation. N-linked (GlcNAc...) asparagine glycans are attached at residues N241, N300, N386, and N403. The region spanning 429–565 (DFPEKPPNRF…AMGFIVKDGP (137 aa)) is the Plastocyanin-like 3 domain. Residues H482, H485, H487, H544, C545, H546, and H550 each coordinate Cu cation.

This sequence belongs to the multicopper oxidase family. It depends on Cu cation as a cofactor. In terms of tissue distribution, expressed in roots, stems and flowers.

The protein resides in the secreted. Its subcellular location is the extracellular space. The protein localises to the apoplast. The catalysed reaction is 4 hydroquinone + O2 = 4 benzosemiquinone + 2 H2O. Lignin degradation and detoxification of lignin-derived products. This is Laccase-1 (LAC1) from Arabidopsis thaliana (Mouse-ear cress).